The primary structure comprises 131 residues: Profilin-1 (131 aa).

C13 and C115 form a disulfide bridge. The Involved in PIP2 interaction signature appears at 81 to 97 (RVIRGKKGAGGITIKKT). T111 carries the phosphothreonine modification.

The protein belongs to the profilin family. Occurs in many kinds of cells as a complex with monomeric actin in a 1:1 ratio.

The protein localises to the cytoplasm. The protein resides in the cytoskeleton. In terms of biological role, binds to actin and affects the structure of the cytoskeleton. At high concentrations, profilin prevents the polymerization of actin, whereas it enhances it at low concentrations. By binding to PIP2, it inhibits the formation of IP3 and DG. This is Profilin-1 (PRO1) from Phleum pratense (Common timothy).